Reading from the N-terminus, the 827-residue chain is Striatin homolog (827 aa).

The stretch at 37 to 109 forms a coiled coil; the sequence is RAHWISEKAE…VEEEEEEDDK (73 aa). Disordered stretches follow at residues 99-123, 181-270, 311-362, and 400-459; these read KVEE…SKDN, KDIN…QLQS, SSVS…DEQS, and EEGN…SELM. Positions 109-123 are enriched in basic and acidic residues; the sequence is KIPKNREPPKKSKDN. Low complexity-rich tracts occupy residues 184–270 and 311–334; these read NNNN…QLQS and SSVS…TSKQ. Residues 337 to 346 show a composition bias toward polar residues; that stretch reads EDPNNVTISK. Composition is skewed to low complexity over residues 347–356, 416–432, and 439–453; these read QQQQEQQQQQ, TPTT…STGS, and SSSS…NSNT. WD repeat units lie at residues 495-534, 548-593, 610-649, 709-748, 751-790, and 797-827; these read SHFD…PTKK, GHTG…IDSY, GHQD…QLYT, NNNS…VVHS, AHSN…CIQD, and KYDE…RILN.

It belongs to the WD repeat striatin family. Part of the core of STRIPAK complexes.

The protein localises to the cytoplasm. It localises to the membrane. Its function is as follows. Calmodulin-binding scaffolding protein which is the center of the striatin-interacting phosphatase and kinase (STRIPAK) complexes. STRIPAK complexes have critical roles in protein (de)phosphorylation and are regulators of multiple signaling pathways including Hippo, MAPK, nuclear receptor and cytoskeleton remodeling. Different types of STRIPAK complexes are involved in a variety of biological processes such as cell growth, differentiation, apoptosis, metabolism and immune regulation. The sequence is that of Striatin homolog (strn) from Dictyostelium discoideum (Social amoeba).